The sequence spans 339 residues: D-erythrose-4-phosphate dehydrogenase (339 aa).

11–12 is an NAD(+) binding site; that stretch reads RI. Substrate-binding positions include 153-155, R199, 212-213, and R235; these read SCT and TK. C154 (nucleophile) is an active-site residue. N317 is an NAD(+) binding site.

It belongs to the glyceraldehyde-3-phosphate dehydrogenase family. Epd subfamily. Homotetramer.

Its subcellular location is the cytoplasm. It catalyses the reaction D-erythrose 4-phosphate + NAD(+) + H2O = 4-phospho-D-erythronate + NADH + 2 H(+). Its pathway is cofactor biosynthesis; pyridoxine 5'-phosphate biosynthesis; pyridoxine 5'-phosphate from D-erythrose 4-phosphate: step 1/5. Functionally, catalyzes the NAD-dependent conversion of D-erythrose 4-phosphate to 4-phosphoerythronate. The sequence is that of D-erythrose-4-phosphate dehydrogenase from Shewanella frigidimarina (strain NCIMB 400).